The sequence spans 234 residues: Leucyl/phenylalanyl-tRNA--protein transferase (234 aa).

It belongs to the L/F-transferase family.

The protein resides in the cytoplasm. The catalysed reaction is N-terminal L-lysyl-[protein] + L-leucyl-tRNA(Leu) = N-terminal L-leucyl-L-lysyl-[protein] + tRNA(Leu) + H(+). It carries out the reaction N-terminal L-arginyl-[protein] + L-leucyl-tRNA(Leu) = N-terminal L-leucyl-L-arginyl-[protein] + tRNA(Leu) + H(+). It catalyses the reaction L-phenylalanyl-tRNA(Phe) + an N-terminal L-alpha-aminoacyl-[protein] = an N-terminal L-phenylalanyl-L-alpha-aminoacyl-[protein] + tRNA(Phe). In terms of biological role, functions in the N-end rule pathway of protein degradation where it conjugates Leu, Phe and, less efficiently, Met from aminoacyl-tRNAs to the N-termini of proteins containing an N-terminal arginine or lysine. The polypeptide is Leucyl/phenylalanyl-tRNA--protein transferase (Pseudoalteromonas atlantica (strain T6c / ATCC BAA-1087)).